The primary structure comprises 94 residues: Small ribosomal subunit protein uS19 (94 aa).

The protein belongs to the universal ribosomal protein uS19 family.

In terms of biological role, protein S19 forms a complex with S13 that binds strongly to the 16S ribosomal RNA. The polypeptide is Small ribosomal subunit protein uS19 (Clostridium botulinum (strain Langeland / NCTC 10281 / Type F)).